The following is a 269-amino-acid chain: Putative pyruvate, phosphate dikinase regulatory protein (269 aa).

Residue 151–158 participates in ADP binding; sequence GISRTSKT.

It belongs to the pyruvate, phosphate/water dikinase regulatory protein family. PDRP subfamily.

It catalyses the reaction N(tele)-phospho-L-histidyl/L-threonyl-[pyruvate, phosphate dikinase] + ADP = N(tele)-phospho-L-histidyl/O-phospho-L-threonyl-[pyruvate, phosphate dikinase] + AMP + H(+). The enzyme catalyses N(tele)-phospho-L-histidyl/O-phospho-L-threonyl-[pyruvate, phosphate dikinase] + phosphate + H(+) = N(tele)-phospho-L-histidyl/L-threonyl-[pyruvate, phosphate dikinase] + diphosphate. Functionally, bifunctional serine/threonine kinase and phosphorylase involved in the regulation of the pyruvate, phosphate dikinase (PPDK) by catalyzing its phosphorylation/dephosphorylation. This is Putative pyruvate, phosphate dikinase regulatory protein from Staphylococcus aureus.